Consider the following 740-residue polypeptide: Elongation factor 2 (740 aa).

One can recognise a tr-type G domain in the interval 23 to 264 (AQIRNAGTLA…MIIEHIPPPN (242 aa)). Residues 32-39 (AHVDHGKT), 98-102 (DTPGH), and 152-155 (NKID) contribute to the GTP site. Residue histidine 605 is modified to Diphthamide.

This sequence belongs to the TRAFAC class translation factor GTPase superfamily. Classic translation factor GTPase family. EF-G/EF-2 subfamily.

It localises to the cytoplasm. Its function is as follows. Catalyzes the GTP-dependent ribosomal translocation step during translation elongation. During this step, the ribosome changes from the pre-translocational (PRE) to the post-translocational (POST) state as the newly formed A-site-bound peptidyl-tRNA and P-site-bound deacylated tRNA move to the P and E sites, respectively. Catalyzes the coordinated movement of the two tRNA molecules, the mRNA and conformational changes in the ribosome. The sequence is that of Elongation factor 2 from Pyrobaculum aerophilum (strain ATCC 51768 / DSM 7523 / JCM 9630 / CIP 104966 / NBRC 100827 / IM2).